A 354-amino-acid polypeptide reads, in one-letter code: 3-isopropylmalate dehydrogenase (354 aa).

73–86 (GPAYDKLDRPLRPE) serves as a coordination point for NAD(+). Residues R93, R103, R131, and D221 each contribute to the substrate site. 3 residues coordinate Mg(2+): D221, D245, and D249. An NAD(+)-binding site is contributed by 279-291 (GSAPDIAGQNLAN).

The protein belongs to the isocitrate and isopropylmalate dehydrogenases family. LeuB type 1 subfamily. As to quaternary structure, homodimer. Requires Mg(2+) as cofactor. Mn(2+) serves as cofactor.

It is found in the cytoplasm. It catalyses the reaction (2R,3S)-3-isopropylmalate + NAD(+) = 4-methyl-2-oxopentanoate + CO2 + NADH. The protein operates within amino-acid biosynthesis; L-leucine biosynthesis; L-leucine from 3-methyl-2-oxobutanoate: step 3/4. Its function is as follows. Catalyzes the oxidation of 3-carboxy-2-hydroxy-4-methylpentanoate (3-isopropylmalate) to 3-carboxy-4-methyl-2-oxopentanoate. The product decarboxylates to 4-methyl-2 oxopentanoate. This chain is 3-isopropylmalate dehydrogenase, found in Chromobacterium violaceum (strain ATCC 12472 / DSM 30191 / JCM 1249 / CCUG 213 / NBRC 12614 / NCIMB 9131 / NCTC 9757 / MK).